A 283-amino-acid polypeptide reads, in one-letter code: Non-selective voltage-gated ion channel VDAC3 (283 aa).

N-acetylcysteine is present on C2. T4 is subject to Phosphothreonine. Residues K12, K15, and K20 each carry the N6-acetyllysine modification. The next 2 beta stranded transmembrane spans lie at 26–35 and 39–47; these read MVKIDLKTKS and VEFSTSGHA. K53 participates in a covalent cross-link: Glycyl lysine isopeptide (Lys-Gly) (interchain with G-Cter in ubiquitin). 3 beta stranded membrane passes run 54-64, 69-76, and 80-89; these read ASGNLETKYKV, LTFTQKWN, and TLGTEISWEN. K90 bears the N6-acetyllysine mark. Residues 95-104 traverse the membrane as a beta stranded segment; the sequence is LKLTLDTIFV. Glycyl lysine isopeptide (Lys-Gly) (interchain with G-Cter in ubiquitin) cross-links involve residues K109 and K110. 10 consecutive transmembrane segments (beta stranded) span residues 111–120, 123–130, 137–145, 150–158, 163–175, 178–185, 189–198, 202–211, 218–227, and 231–238; these read SGKLKASYRR, FSLGSNVD, TIYGWAVLA, LAGYQMSFD, KLSQ…GYKA, FQLHTHVN, EFGGSIYQKV, IETSINLAWT, RFGIAAKYKL, and TSLSAKVN. S241 carries the post-translational modification Phosphoserine. NAD(+)-binding positions include 242 to 244 and 260 to 264; these read LIG and SALID. Transmembrane regions (beta stranded) follow at residues 242-251 and 254-263; these read LIGLGYTQTL and GVKLTLSALI. Residue K266 is modified to N6-acetyllysine; alternate. A Glycyl lysine isopeptide (Lys-Gly) (interchain with G-Cter in ubiquitin); alternate cross-link involves residue K266. The beta stranded transmembrane segment at 273–282 threads the bilayer; sequence HKVGLGFELE.

This sequence belongs to the eukaryotic mitochondrial porin family. Interacts with ARMC12 in a TBC1D21-dependent manner. Interacts with MISFA. Post-translationally, ubiquitinated by PRKN during mitophagy, leading to its degradation and enhancement of mitophagy. Deubiquitinated by USP30. In terms of tissue distribution, highest levels of expression detected in testis, less but still abundant expression in heart, kidney, brain, and skeletal muscle.

The protein resides in the mitochondrion outer membrane. The protein localises to the membrane. It catalyses the reaction chloride(in) = chloride(out). It carries out the reaction K(+)(in) = K(+)(out). Its function is as follows. Non-selective voltage-gated ion channel that mediates the transport of anions and cations through the mitochondrion outer membrane and plasma membrane. Forms a high-conducting channel with a stable open state and a voltage-induced closure with a mild preference for anions over cations. Involved in male fertility and sperm mitochondrial sheath formation. The chain is Non-selective voltage-gated ion channel VDAC3 from Mus musculus (Mouse).